The primary structure comprises 630 residues: MATRPGPLTEWPWQWMGGYKYLVLAPVAMHTAHRLATKGWGDFDPAYTFMLPTLLLRMIHNQIWISLSRYQTARRKHLIVDRSLDFEQVDRVLYLDDQIILNGLLFYLGYAIIPNFRLMPVWRTNGALITILLHMGPVEFLYYWFHRALHHHFLYSRYHSHHHASIVTEPITSVIHPFAEHLAYFLLFSISILPPIFMGCGSVLAGVLYITYIDFMNNMGHCNFELMPKWMFQTFPPLKYLIYTPSFHSLHHTQFRTNYSLFMPFYDYIYNTMDSSSDELYERSLKGTEETPDIVHLTHMTSLKSTYHLRIGITSISSKPCNDSVWYMWMLWPVAWLSMVLAWIYGSSAFVVERLKLKKFSMQVWALPRYNFQVMDSSALGKVSPSTILIEKAILDANEKGVKVLSLGLLNQAEQLNGSGELFAKKYPRLRVRLIDGSGLATAVVLNSIPFGTKQVFLCGSNSKVTRATAIALCQRGVQVILNQEKEYGMLKSRVPESRAIYLKFSNDETPQIWIGDSIDDAQGRAPKGTIFIPTSQFPLKKARKDCTYLSNPAMKIPETMQNVHTCENWLPRRVMSAWRIAGILHALEGWEMHECGDDMMTIEKTWSAAIKHGFKPLTKPCSLNSGTDL.

4 consecutive transmembrane segments (helical) span residues 93–113, 126–146, 185–205, and 325–345; these read LYLD…YAII, GALI…YWFH, FLLF…SVLA, and VWYM…AWIY. The Fatty acid hydroxylase domain occupies 133-272; sequence LHMGPVEFLY…MPFYDYIYNT (140 aa).

Belongs to the sterol desaturase family. In terms of assembly, homodimer. As to expression, expressed in panicles at low levels.

Its subcellular location is the endoplasmic reticulum membrane. The enzyme catalyses a long-chain fatty aldehyde + 2 NADPH + O2 + H(+) = a long-chain alkane + formate + 2 NADP(+) + H2O. Functionally, aldehyde decarbonylase involved in the conversion of aldehydes to alkanes. Core component of a very-long-chain alkane synthesis complex. In Oryza sativa subsp. japonica (Rice), this protein is Very-long-chain aldehyde decarbonylase GL1-7.